Here is a 490-residue protein sequence, read N- to C-terminus: Myocilin (490 aa).

An N-terminal signal peptide occupies residues 1–18; it reads MPAVQLLLLAGLVWGAGA. The stretch at 55 to 170 forms a coiled coil; sequence SAIQDLQRDS…QEVARLARGQ (116 aa). A disordered region spans residues 168 to 187; that stretch reads RGQCPQARDTSQDVPAGSRE. Positions 230 to 489 constitute an Olfactomedin-like domain; the sequence is GCGELVWVGQ…MVTYDIKLSK (260 aa). Cysteines 231 and 419 form a disulfide. Residues Asp-366, Asn-414, Ala-415, Ile-463, and Asp-464 each coordinate Ca(2+). A Microbody targeting signal motif is present at residues 488 to 490; it reads SKI.

In terms of assembly, homodimer (via N-terminus). Can also form higher oligomers. Interacts with OLFM3, FN1, NRCAM, GLDN and NFASC. Interacts (via N-terminus) with MYL2. Interacts with SFRP1, FRZB, FZD7, FZD10, FZD1 and WIF1; regulates Wnt signaling. Interacts with SNTA1; regulates muscle hypertrophy. Interacts with ERBB2 and ERBB3; activates ERBB2-ERBB3 signaling pathway. Interacts with SNCG; affects its secretion and its aggregation. Palmitoylated. In terms of processing, glycosylated. Post-translationally, undergoes a calcium-dependent proteolytic cleavage at Arg-212 by CAPN2 in the endoplasmic reticulum. The result is the production of two fragments, one of 35 kDa containing the C-terminal olfactomedin-like domain, and another of 20 kDa containing the N-terminal leucine zipper-like domain. In terms of tissue distribution, detected in eye aqueous humor (at protein level).

Its subcellular location is the secreted. It is found in the golgi apparatus. The protein localises to the cytoplasmic vesicle. The protein resides in the extracellular space. It localises to the extracellular matrix. Its subcellular location is the extracellular exosome. It is found in the mitochondrion. The protein localises to the mitochondrion intermembrane space. The protein resides in the mitochondrion inner membrane. It localises to the mitochondrion outer membrane. Its subcellular location is the rough endoplasmic reticulum. It is found in the cell projection. The protein localises to the cilium. The protein resides in the endoplasmic reticulum. Secreted glycoprotein regulating the activation of different signaling pathways in adjacent cells to control different processes including cell adhesion, cell-matrix adhesion, cytoskeleton organization and cell migration. Promotes substrate adhesion, spreading and formation of focal contacts. Negatively regulates cell-matrix adhesion and stress fiber assembly through Rho protein signal transduction. Modulates the organization of actin cytoskeleton by stimulating the formation of stress fibers through interactions with components of Wnt signaling pathways. Promotes cell migration through activation of PTK2 and the downstream phosphatidylinositol 3-kinase signaling. Plays a role in bone formation and promotes osteoblast differentiation in a dose-dependent manner through mitogen-activated protein kinase signaling. Mediates myelination in the peripheral nervous system through ERBB2/ERBB3 signaling. Plays a role as a regulator of muscle hypertrophy through the components of dystrophin-associated protein complex. Involved in positive regulation of mitochondrial depolarization. Plays a role in neurite outgrowth. May participate in the obstruction of fluid outflow in the trabecular meshwork. This is Myocilin from Oryctolagus cuniculus (Rabbit).